The sequence spans 250 residues: tRNA (guanine-N(1)-)-methyltransferase (250 aa).

S-adenosyl-L-methionine contacts are provided by residues Gly116 and 136 to 141 (IGDYVL).

Belongs to the RNA methyltransferase TrmD family. In terms of assembly, homodimer.

Its subcellular location is the cytoplasm. It catalyses the reaction guanosine(37) in tRNA + S-adenosyl-L-methionine = N(1)-methylguanosine(37) in tRNA + S-adenosyl-L-homocysteine + H(+). Its function is as follows. Specifically methylates guanosine-37 in various tRNAs. The chain is tRNA (guanine-N(1)-)-methyltransferase from Pseudomonas fluorescens (strain ATCC BAA-477 / NRRL B-23932 / Pf-5).